The following is a 297-amino-acid chain: Phosphoribosylaminoimidazole-succinocarboxamide synthase (297 aa).

Belongs to the SAICAR synthetase family.

It catalyses the reaction 5-amino-1-(5-phospho-D-ribosyl)imidazole-4-carboxylate + L-aspartate + ATP = (2S)-2-[5-amino-1-(5-phospho-beta-D-ribosyl)imidazole-4-carboxamido]succinate + ADP + phosphate + 2 H(+). The protein operates within purine metabolism; IMP biosynthesis via de novo pathway; 5-amino-1-(5-phospho-D-ribosyl)imidazole-4-carboxamide from 5-amino-1-(5-phospho-D-ribosyl)imidazole-4-carboxylate: step 1/2. In Corynebacterium diphtheriae (strain ATCC 700971 / NCTC 13129 / Biotype gravis), this protein is Phosphoribosylaminoimidazole-succinocarboxamide synthase.